We begin with the raw amino-acid sequence, 295 residues long: HTH-type transcriptional regulator TfdS (295 aa).

The HTH lysR-type domain occupies 1 to 58; that stretch reads MEFRQLRYFVAAAEEGNVGAAARRLHISQPPVTRQIHALEQHLGVLLFERSARGVQLT. A DNA-binding region (H-T-H motif) is located at residues 18-37; it reads VGAAARRLHISQPPVTRQIH.

This sequence belongs to the LysR transcriptional regulatory family.

It is found in the cytoplasm. Its function is as follows. Involved in the regulation of 3-chlorocatechol degradation. Transcriptional regulator of tfdB expression. Acts as a repressor in the absence of its effector (either 2-cis-chlorodiene lactone or chloromaleylacetate) but acts as an activator when its effector is present. The protein is HTH-type transcriptional regulator TfdS (tfdS) of Cupriavidus pinatubonensis (strain JMP 134 / LMG 1197) (Cupriavidus necator (strain JMP 134)).